A 57-amino-acid chain; its full sequence is Large ribosomal subunit protein bL32c (57 aa).

Belongs to the bacterial ribosomal protein bL32 family.

Its subcellular location is the plastid. It is found in the chloroplast. This Nandina domestica (Heavenly bamboo) protein is Large ribosomal subunit protein bL32c.